The primary structure comprises 345 residues: N-acetyl-gamma-glutamyl-phosphate reductase (345 aa).

Cys-149 is a catalytic residue.

Belongs to the NAGSA dehydrogenase family. Type 1 subfamily.

It localises to the cytoplasm. It catalyses the reaction N-acetyl-L-glutamate 5-semialdehyde + phosphate + NADP(+) = N-acetyl-L-glutamyl 5-phosphate + NADPH + H(+). It participates in amino-acid biosynthesis; L-arginine biosynthesis; N(2)-acetyl-L-ornithine from L-glutamate: step 3/4. In terms of biological role, catalyzes the NADPH-dependent reduction of N-acetyl-5-glutamyl phosphate to yield N-acetyl-L-glutamate 5-semialdehyde. This Bacillus subtilis (strain 168) protein is N-acetyl-gamma-glutamyl-phosphate reductase.